The primary structure comprises 201 residues: 3-isopropylmalate dehydratase small subunit (201 aa).

The protein belongs to the LeuD family. LeuD type 1 subfamily. In terms of assembly, heterodimer of LeuC and LeuD.

The enzyme catalyses (2R,3S)-3-isopropylmalate = (2S)-2-isopropylmalate. The protein operates within amino-acid biosynthesis; L-leucine biosynthesis; L-leucine from 3-methyl-2-oxobutanoate: step 2/4. In terms of biological role, catalyzes the isomerization between 2-isopropylmalate and 3-isopropylmalate, via the formation of 2-isopropylmaleate. This Paracoccus denitrificans (strain Pd 1222) protein is 3-isopropylmalate dehydratase small subunit.